Here is a 499-residue protein sequence, read N- to C-terminus: Potassium voltage-gated channel subfamily A member 2 (499 aa).

Residues 1–27 (MTVATGEPADEAAALPGHPQDTYDPEA) form a disordered region. Residues 1 to 125 (MTVATGEPAD…YELGEEAMEM (125 aa)) are tetramerization domain. Residues 1–160 (MTVATGEPAD…LLFEYPESSG (160 aa)) are Cytoplasmic-facing. Residues 161–182 (PARIIAIVSVMVILISIVSFCL) traverse the membrane as a helical segment. The Extracellular portion of the chain corresponds to 183-221 (ETLPIFRDENEDMHGGGVTFHTYSNSTIGYQQSTSFTDP). An N-linked (GlcNAc...) asparagine glycan is attached at Asn-207. The chain crosses the membrane as a helical span at residues 222-243 (FFIVETLCIIWFSFEFLVRFFA). Cys-244 carries S-palmitoyl cysteine lipidation. At 244-254 (CPSKAGFFTNI) the chain is on the cytoplasmic side. A helical membrane pass occupies residues 255–275 (MNIIDIVAIIPYFITLGTELA). The Extracellular portion of the chain corresponds to 276-289 (EKPEDAQQGQQAMS). A helical; Voltage-sensor membrane pass occupies residues 290 to 310 (LAILRVIRLVRVFRIFKLSRH). The Cytoplasmic portion of the chain corresponds to 311–325 (SKGLQILGQTLKASM). The S4-S5 linker stretch occupies residues 312–325 (KGLQILGQTLKASM). Residues 326–347 (RELGLLIFFLFIGVILFSSAVY) form a helical membrane-spanning segment. The Extracellular portion of the chain corresponds to 348 to 361 (FAEADERESQFPSI). Positions 362 to 373 (PDAFWWAVVSMT) form an intramembrane region, helical. The Selectivity filter motif lies at 374-379 (TVGYGD). An intramembrane segment occupies 374–381 (TVGYGDMV). Over 382–388 (PTTIGGK) the chain is Extracellular. Residues 389-417 (IVGSLCAIAGVLTIALPVPVIVSNFNYFY) traverse the membrane as a helical segment. Residues 418-499 (HRETEGEEQA…VNITKMLTDV (82 aa)) are Cytoplasmic-facing. The residue at position 429 (Tyr-429) is a Phosphotyrosine. Residues Ser-434, Ser-440, Ser-441, and Ser-449 each carry the phosphoserine modification. Position 458 is a phosphotyrosine (Tyr-458). Ser-468 bears the Phosphoserine mark. Residues 497–499 (TDV) carry the PDZ-binding motif.

Belongs to the potassium channel family. A (Shaker) (TC 1.A.1.2) subfamily. Kv1.2/KCNA2 sub-subfamily. As to quaternary structure, homotetramer and heterotetramer with other channel-forming alpha subunits, such as KCNA1, KCNA4, KCNA5, KCNA6 and KCNA7. Channel activity is regulated by interaction with the beta subunits, including KCNAB1 and KCNAB2. Identified in a complex with KCNA1 and KCNAB2. Identified in a complex with KCNA5 and KCNAB1. Interacts with the beta subunit KCNAB1. Identified in a complex with KCNA4 and FYN. Interacts with PTK2B. Interacts (via C-terminus) with CTTN. Interacts (via N-terminal cytoplasmic domain) with RHOA (GTP-bound form); this regulates channel activity by reducing location at the cell surface in response to CHRM1 activation. Interacts with DRD2. Interacts with SIGMAR1; cocaine consumption leads to increased interaction. Interacts with ADAM22. Interacts with CNTNAP2. Interacts (via C-terminus) with the PDZ domains of DLG1, DLG2 and DLG4. Interacts with ADAM11. Interacts with LYNX1. In terms of processing, phosphorylated on tyrosine residues; phosphorylation increases in response to ischemia. Phosphorylated on tyrosine residues by activated PTK2B/PYK2. Phosphorylation on tyrosine residues suppresses ion channel activity. Phosphorylated on tyrosine residues in response to CHRM1 activation; this abolishes interaction with CTTN. This is probably due to endocytosis of the phosphorylated channel subunits. Phosphorylated on serine residues in response to increased cAMP levels; phosphorylation is apparently not catalyzed by PKA. Post-translationally, N-glycosylated, with complex, sialylated N-glycans. In terms of tissue distribution, expressed in a wide variety of gastrointestinal smooth muscles. Not expressed in portal vein, renal artery, and uterus.

It localises to the cell membrane. Its subcellular location is the membrane. It is found in the cell projection. The protein localises to the axon. The protein resides in the synapse. It localises to the presynaptic cell membrane. Its subcellular location is the synaptosome. It is found in the endoplasmic reticulum membrane. The protein localises to the dendrite. The protein resides in the lamellipodium membrane. It localises to the cell junction. Its subcellular location is the paranodal septate junction. It carries out the reaction K(+)(in) = K(+)(out). Its activity is regulated as follows. Inhibited by 4-aminopyridine (4-AP). Inhibited by dendrotoxin (DTX) and charybdotoxin (CTX), but not by tetraethylammonium (TEA). Inhibited by tityustoxin-K alpha (TsTX-Kalpha), a toxin that is highly specific for KCNA2. Inhibited by maurotoxin. Inhibited by kappaM conotoxins kappaM-RIIIJ and kappaM-RIIIK. Voltage-gated potassium channel that mediates transmembrane potassium transport in excitable membranes, primarily in the brain and the central nervous system, but also in the cardiovascular system. Prevents aberrant action potential firing and regulates neuronal output. Forms tetrameric potassium-selective channels through which potassium ions pass in accordance with their electrochemical gradient. The channel alternates between opened and closed conformations in response to the voltage difference across the membrane. Can form functional homotetrameric channels and heterotetrameric channels that contain variable proportions of KCNA1, KCNA2, KCNA4, KCNA5, KCNA6, KCNA7, and possibly other family members as well; channel properties depend on the type of alpha subunits that are part of the channel. Channel properties are modulated by cytoplasmic beta subunits that regulate the subcellular location of the alpha subunits and promote rapid inactivation of delayed rectifier potassium channels. In vivo, membranes probably contain a mixture of heteromeric potassium channel complexes, making it difficult to assign currents observed in intact tissues to any particular potassium channel family member. Homotetrameric KCNA2 forms a delayed-rectifier potassium channel that opens in response to membrane depolarization, followed by slow spontaneous channel closure. In contrast, a heteromultimer formed by KCNA2 and KCNA4 shows rapid inactivation. Regulates neuronal excitability and plays a role as pacemaker in the regulation of neuronal action potentials. KCNA2-containing channels play a presynaptic role and prevent hyperexcitability and aberrant action potential firing. Response to toxins that are selective for KCNA2-containing potassium channels suggests that in Purkinje cells, dendritic subthreshold KCNA2-containing potassium channels prevent random spontaneous calcium spikes, suppressing dendritic hyperexcitability without hindering the generation of somatic action potentials, and thereby play an important role in motor coordination. Plays a role in the induction of long-term potentiation of neuron excitability in the CA3 layer of the hippocampus. May function as down-stream effector for G protein-coupled receptors and inhibit GABAergic inputs to basolateral amygdala neurons. May contribute to the regulation of neurotransmitter release, such as gamma-aminobutyric acid (GABA). Contributes to the regulation of the axonal release of the neurotransmitter dopamine. Reduced KCNA2 expression plays a role in the perception of neuropathic pain after peripheral nerve injury, but not acute pain. Plays a role in the regulation of the time spent in non-rapid eye movement (NREM) sleep. In Canis lupus familiaris (Dog), this protein is Potassium voltage-gated channel subfamily A member 2 (KCNA2).